Reading from the N-terminus, the 142-residue chain is Snaclec GPIB-binding protein subunit alpha (142 aa).

3 disulfide bridges follow: cysteine 6–cysteine 17, cysteine 39–cysteine 136, and cysteine 111–cysteine 128. The region spanning 13–137 is the C-type lectin domain; sequence HRQYCYKFFQ…CVEGNPFVCK (125 aa).

Belongs to the snaclec family. In terms of assembly, heterodimer of subunits alpha and beta; disulfide-linked. As to expression, expressed by the venom gland.

The protein localises to the secreted. Functionally, binds to platelet GPIb (subunit alpha) (GP1BA) and functions as a receptor blocker for vWF binding to GPIb. The platelet GPIb-binding site resides on the GPIB-BP subunit beta and not on the alpha subunit. At a final concentration of 104 nM totally abolishes vWF-dependent shear-induced platelet aggregation (SIPA) at a high shear stress, but had no effect on SIPA at a low shear stress. This chain is Snaclec GPIB-binding protein subunit alpha, found in Bothrops jararaca (Jararaca).